Reading from the N-terminus, the 95-residue chain is Aspartyl/glutamyl-tRNA(Asn/Gln) amidotransferase subunit C (95 aa).

The protein belongs to the GatC family. In terms of assembly, heterotrimer of A, B and C subunits.

It catalyses the reaction L-glutamyl-tRNA(Gln) + L-glutamine + ATP + H2O = L-glutaminyl-tRNA(Gln) + L-glutamate + ADP + phosphate + H(+). It carries out the reaction L-aspartyl-tRNA(Asn) + L-glutamine + ATP + H2O = L-asparaginyl-tRNA(Asn) + L-glutamate + ADP + phosphate + 2 H(+). Its function is as follows. Allows the formation of correctly charged Asn-tRNA(Asn) or Gln-tRNA(Gln) through the transamidation of misacylated Asp-tRNA(Asn) or Glu-tRNA(Gln) in organisms which lack either or both of asparaginyl-tRNA or glutaminyl-tRNA synthetases. The reaction takes place in the presence of glutamine and ATP through an activated phospho-Asp-tRNA(Asn) or phospho-Glu-tRNA(Gln). This Rhizobium etli (strain ATCC 51251 / DSM 11541 / JCM 21823 / NBRC 15573 / CFN 42) protein is Aspartyl/glutamyl-tRNA(Asn/Gln) amidotransferase subunit C.